We begin with the raw amino-acid sequence, 1104 residues long: MALLGKHCDIPTNGCGSERWNSTFARKDELINSLVSALDSMCSALSKLNTEVACVAVHNESVFVMGTEKGRVFLNTRKELQSDFLRFCRGPLWNDPEAGHPKKVQRCEGGGRSLPRSSLEQCSDVYLLQKMVEEVFDVLYSEAMGRATVVPLPYERLLREPGLLAVQGLPEGLAFRRPAEYDPKALMAILEHSHRIRFKLRRPPDDGGQDTKALVEMNGISLLPKGSRDCGLHGQASKVAPQDLTPTATPSSMANFLYSTSMPNHTIRELKQEVPTCPLTPSDLGMGWPVPEPHVPSTQDFSDCCGQTPAGPAGPLIQNVHASKRILFSIVHDKSEKWDPFIKEMEDINTLRECVQILFNSRYAEALGLDHMVPVPYRKIACDPEAVEIVGIPDKIPFKRPCTYGVPKLKRILEERHSIHFIIKRMFDERIFTGNKFTKDPMKLEPASPPEDTSTEVCRDSMLDLAGTAWSDMSSVSEDCGPGTSGEIAMLRPIKIEPEELDIIQVTVSDPSPTSEEMTDSLPGHLPSEDSGYGMEMPADKGPSEEPWSEERPAEESPGDVIRPLRKQVEMLFNTKYAKAIGTSEPVKVPYSKFLMHPEELFVLGLPEGISLRRPNCFGIAKLRKILEASNSIQFVIKRPELLTDGVKEPVLDTQERDSWDRLVDETPKRQGLQENYNTRLSRIDIANTLREQVQDLFNKKYGEALGIKYPVQVPYKRIKSNPGSVIIEGLPPGIPFRKPCTFGSQNLERILSVADKIKFTVTRPFQGLIPKPETKILTTGHEAGKTTRPRRLQQDTWQPDEDDANRLGEKVILREQVKELFNEKYGEALGLNRPVLVPYKLIRDSPDAVEVKGLPDDIPFRNPNTYDIHRLEKILKAREHVRMVIINQLQPFAEVCNDPKVPEEDDSNKLGKKVILREQVKELFNEKYGEALGLNRPVLVPYKLIRDSPDAVEVKGLPDDIPFRNPNTYDIHRLEKILKAREHVRMVIINQLQPFGDVCNNAKVPAKDNIPKRKRKRVSEGNSVSSSSSSSSSSSNPESVASTNQISLVVKSRGSELHPNSVWPLPLPRAGPSTAPGTGRHWALRGTQPTTEGQAHPLVLPTR.

Glycyl lysine isopeptide (Lys-Gly) (interchain with G-Cter in SUMO2) cross-links involve residues K27, K184, K212, K225, K238, K271, K337, K436, K439, and K443. A GTF2I-like 1 repeat occupies 119–213 (LEQCSDVYLL…PDDGGQDTKA (95 aa)). The stretch at 342–436 (IKEMEDINTL…FDERIFTGNK (95 aa)) is one GTF2I-like 2 repeat. S448 carries the phosphoserine modification. The interval 509–559 (SDPSPTSEEMTDSLPGHLPSEDSGYGMEMPADKGPSEEPWSEERPAEESPG) is disordered. The segment covering 538 to 555 (PADKGPSEEPWSEERPAE) has biased composition (basic and acidic residues). The GTF2I-like 3 repeat unit spans residues 556–650 (ESPGDVIRPL…ELLTDGVKEP (95 aa)). Glycyl lysine isopeptide (Lys-Gly) (interchain with G-Cter in SUMO2) cross-links involve residues K567, K579, K588, K622, K638, K669, K709, K717, K757, K759, and K772. The stretch at 681-775 (LSRIDIANTL…FQGLIPKPET (95 aa)) is one GTF2I-like 4 repeat. The interval 783–802 (EAGKTTRPRRLQQDTWQPDE) is disordered. One copy of the GTF2I-like 5 repeat lies at 805–899 (ANRLGEKVIL…LQPFAEVCND (95 aa)). Residues K841 and K901 each participate in a glycyl lysine isopeptide (Lys-Gly) (interchain with G-Cter in SUMO2) cross-link. Residues 908–1002 (SNKLGKKVIL…LQPFGDVCNN (95 aa)) form a GTF2I-like 6 repeat. Disordered stretches follow at residues 1001–1044 (NNAK…VAST) and 1058–1104 (LHPN…LPTR). A Nuclear localization signal motif is present at residues 1012-1019 (PKRKRKRV). Residues 1021-1043 (EGNSVSSSSSSSSSSSNPESVAS) show a composition bias toward low complexity.

Belongs to the TFII-I family. In terms of assembly, interacts with the retinoblastoma protein (RB1) via its C-terminus. Widely expressed.

The protein resides in the nucleus. Its function is as follows. May be a transcription regulator involved in cell-cycle progression and skeletal muscle differentiation. May repress GTF2I transcriptional functions, by preventing its nuclear residency, or by inhibiting its transcriptional activation. May contribute to slow-twitch fiber type specificity during myogenesis and in regenerating muscles. Binds troponin I slow-muscle fiber enhancer (USE B1). Binds specifically and with high affinity to the EFG sequences derived from the early enhancer of HOXC8. This Mus musculus (Mouse) protein is General transcription factor II-I repeat domain-containing protein 1 (Gtf2ird1).